We begin with the raw amino-acid sequence, 454 residues long: tRNA modification GTPase MnmE (454 aa).

(6S)-5-formyl-5,6,7,8-tetrahydrofolate is bound by residues R23, E80, and K120. Positions 216 to 377 constitute a TrmE-type G domain; the sequence is GMKVVIAGRP…LRDHLKQSMG (162 aa). N226 is a K(+) binding site. Residues 226–231, 245–251, 270–273, 335–338, and 358–360 each bind GTP; these read NAGKSS, TDIAGTT, DTAG, NKAD, and SAR. Mg(2+) is bound at residue S230. Positions 245, 247, and 250 each coordinate K(+). Residue T251 participates in Mg(2+) binding. K454 provides a ligand contact to (6S)-5-formyl-5,6,7,8-tetrahydrofolate.

The protein belongs to the TRAFAC class TrmE-Era-EngA-EngB-Septin-like GTPase superfamily. TrmE GTPase family. Homodimer. Heterotetramer of two MnmE and two MnmG subunits. K(+) is required as a cofactor.

It is found in the cytoplasm. Exhibits a very high intrinsic GTPase hydrolysis rate. Involved in the addition of a carboxymethylaminomethyl (cmnm) group at the wobble position (U34) of certain tRNAs, forming tRNA-cmnm(5)s(2)U34. In Yersinia pestis, this protein is tRNA modification GTPase MnmE.